The sequence spans 180 residues: Superoxide dismutase [Cu-Zn] (180 aa).

The first 19 residues, Met1–Ala19, serve as a signal peptide directing secretion. His68, His70, and His85 together coordinate Cu cation. Cys79 and Cys171 are joined by a disulfide. The Zn(2+) site is built by His85, His93, His102, and Asp105. His142 contributes to the Cu cation binding site.

Belongs to the Cu-Zn superoxide dismutase family. Homodimer. Requires Cu cation as cofactor. It depends on Zn(2+) as a cofactor.

The protein localises to the cytoplasm. The catalysed reaction is 2 superoxide + 2 H(+) = H2O2 + O2. In terms of biological role, destroys radicals which are normally produced within the cells and which are toxic to biological systems. Required for normal brood size. May be involved in regulating mpk-1 phosphorylation downstream of phosphatase ptp-2 during oocyte maturation. In Caenorhabditis briggsae, this protein is Superoxide dismutase [Cu-Zn].